We begin with the raw amino-acid sequence, 417 residues long: Zinc finger CCCH domain-containing protein ZFN-like (417 aa).

C3H1-type zinc fingers lie at residues 31–58 (PGEP…HPPN) and 75–103 (RLGQ…HPKD). A C3H1-type 3; degenerate zinc finger spans residues 121 to 149 (RPNESERAYYLRTGQCKFGNTCKFHHPQP). C3H1-type zinc fingers lie at residues 278 to 306 (RPDQ…HPRE) and 324 to 352 (RPGE…HPMG). The tract at residues 383-417 (SSEGLVESGTAKPRRLSLSETRPIPPGDDNIDDEG) is disordered.

It is found in the nucleus. In Pisum sativum (Garden pea), this protein is Zinc finger CCCH domain-containing protein ZFN-like.